A 274-amino-acid polypeptide reads, in one-letter code: Large ribosomal subunit protein uL2cz/uL2cy (274 aa).

Disordered stretches follow at residues 1 to 33 and 223 to 265; these read MAIH…LIYG and MNPV…KYND.

This sequence belongs to the universal ribosomal protein uL2 family. In terms of assembly, part of the 50S ribosomal subunit.

The protein localises to the plastid. The protein resides in the chloroplast. This Pelargonium hortorum (Common geranium) protein is Large ribosomal subunit protein uL2cz/uL2cy (rpl2-A).